The sequence spans 449 residues: 23S rRNA (uracil(1939)-C(5))-methyltransferase RlmD (449 aa).

The region spanning 15–73 (KAIPAKNLTVTVTSLDPFGQGVARHEGKTVFVTGVLPGEQAEVQLTEDKRQFSHAKLKR) is the TRAM domain. The [4Fe-4S] cluster site is built by Cys-86, Cys-92, Cys-95, and Cys-173. The S-adenosyl-L-methionine site is built by Gln-276, Phe-305, Asn-310, Glu-326, Asn-353, and Asp-374. Cys-400 functions as the Nucleophile in the catalytic mechanism.

This sequence belongs to the class I-like SAM-binding methyltransferase superfamily. RNA M5U methyltransferase family. RlmD subfamily.

It carries out the reaction uridine(1939) in 23S rRNA + S-adenosyl-L-methionine = 5-methyluridine(1939) in 23S rRNA + S-adenosyl-L-homocysteine + H(+). Catalyzes the formation of 5-methyl-uridine at position 1939 (m5U1939) in 23S rRNA. This Pectobacterium carotovorum subsp. carotovorum (strain PC1) protein is 23S rRNA (uracil(1939)-C(5))-methyltransferase RlmD.